An 84-amino-acid polypeptide reads, in one-letter code: Small ribosomal subunit protein uS17 (84 aa).

This sequence belongs to the universal ribosomal protein uS17 family. In terms of assembly, part of the 30S ribosomal subunit.

Functionally, one of the primary rRNA binding proteins, it binds specifically to the 5'-end of 16S ribosomal RNA. The protein is Small ribosomal subunit protein uS17 of Glaesserella parasuis serovar 5 (strain SH0165) (Haemophilus parasuis).